The following is a 260-amino-acid chain: DNA repair protein RecO (260 aa).

It belongs to the RecO family.

Its function is as follows. Involved in DNA repair and RecF pathway recombination. The sequence is that of DNA repair protein RecO from Chlorobaculum parvum (strain DSM 263 / NCIMB 8327) (Chlorobium vibrioforme subsp. thiosulfatophilum).